Reading from the N-terminus, the 109-residue chain is ADIVMTQTPASVSAAVGGTVTINCQASQNIDSWLAWYQQKPGQPPKVLIYRTSTLASGVPSRFKGSRSGTEFTLTISDLECADAATYYCQSYYSISSAFGGGTEVVVKG.

The tract at residues 1–24 (ADIVMTQTPASVSAAVGGTVTINC) is framework-1. Residues 25–35 (QASQNIDSWLA) are complementarity-determining-1. The segment at 36–50 (WYQQKPGQPPKVLIY) is framework-2. Residues 51-57 (RTSTLAS) form a complementarity-determining-2 region. A framework-3 region spans residues 58–89 (GVPSRFKGSRSGTEFTLTISDLECADAATYYC). The tract at residues 90–98 (QSYYSISSA) is complementarity-determining-3. Residues 99 to 108 (FGGGTEVVVK) are framework-4.

The sequence is that of Ig kappa chain V region 3374 from Oryctolagus cuniculus (Rabbit).